The following is a 354-amino-acid chain: Chaperone protein dnaJ 49 (354 aa).

In terms of domain architecture, J spans 99-163 (DYYAILGLEK…NSRRQFDQVG (65 aa)). A helical membrane pass occupies residues 237 to 257 (CLTIIQILPFFLLLLLAYLPF).

This sequence belongs to the DnaJ family. C/III subfamily.

It localises to the membrane. Its function is as follows. Plays a continuous role in plant development probably in the structural organization of compartments. The chain is Chaperone protein dnaJ 49 (ATJ49) from Arabidopsis thaliana (Mouse-ear cress).